We begin with the raw amino-acid sequence, 513 residues long: tRNA-2-methylthio-N(6)-dimethylallyladenosine synthase (513 aa).

The MTTase N-terminal domain occupies 67–185 (KTFLIKTYGC…LPEILEEAYL (119 aa)). Residues Cys-76, Cys-112, Cys-146, Cys-222, Cys-226, and Cys-229 each contribute to the [4Fe-4S] cluster site. Residues 208 to 438 (REGNIKAWVN…NKKVACYSER (231 aa)) form the Radical SAM core domain. Residues 441–504 (QQYEGQTVQV…QFSLNGTFIS (64 aa)) form the TRAM domain.

Belongs to the methylthiotransferase family. MiaB subfamily. As to quaternary structure, monomer. It depends on [4Fe-4S] cluster as a cofactor.

The protein resides in the cytoplasm. The enzyme catalyses N(6)-dimethylallyladenosine(37) in tRNA + (sulfur carrier)-SH + AH2 + 2 S-adenosyl-L-methionine = 2-methylsulfanyl-N(6)-dimethylallyladenosine(37) in tRNA + (sulfur carrier)-H + 5'-deoxyadenosine + L-methionine + A + S-adenosyl-L-homocysteine + 2 H(+). Functionally, catalyzes the methylthiolation of N6-(dimethylallyl)adenosine (i(6)A), leading to the formation of 2-methylthio-N6-(dimethylallyl)adenosine (ms(2)i(6)A) at position 37 in tRNAs that read codons beginning with uridine. In Staphylococcus saprophyticus subsp. saprophyticus (strain ATCC 15305 / DSM 20229 / NCIMB 8711 / NCTC 7292 / S-41), this protein is tRNA-2-methylthio-N(6)-dimethylallyladenosine synthase.